The sequence spans 439 residues: CBL-interacting serine/threonine-protein kinase 20 (439 aa).

A Protein kinase domain is found at 12 to 266 (YELGRLLGQG…IEKIMENSWF (255 aa)). ATP contacts are provided by residues 18 to 26 (LGQGTFAKV) and Lys-41. Asp-134 functions as the Proton acceptor in the catalytic mechanism. The tract at residues 152–181 (DFGLSALRESKQQDGLLHTTCGTPAYVAPE) is activation loop. The residue at position 156 (Ser-156) is a Phosphoserine. The residue at position 170 (Thr-170) is a Phosphothreonine. The NAF domain occupies 297–322 (VKPMSYNAFDLISSLSQGFDLSGLFE). Residues 326 to 356 (RSESKFTTKKDAKEIVSKFEEIATSSERFNL) are PPI.

Belongs to the protein kinase superfamily. CAMK Ser/Thr protein kinase family. SNF1 subfamily. Mn(2+) is required as a cofactor. Post-translationally, autophosphorylated. Confined to mature leaves.

The catalysed reaction is L-seryl-[protein] + ATP = O-phospho-L-seryl-[protein] + ADP + H(+). It carries out the reaction L-threonyl-[protein] + ATP = O-phospho-L-threonyl-[protein] + ADP + H(+). Its function is as follows. CIPK serine-threonine protein kinases interact with CBL proteins. Binding of a CBL protein to the regulatory NAF domain of CIPK protein lead to the activation of the kinase in a calcium-dependent manner. Required for the abscisic acid-mediated (ABA) signaling pathway involved in seed germination and growth elongation inhibition. The protein is CBL-interacting serine/threonine-protein kinase 20 (CIPK20) of Arabidopsis thaliana (Mouse-ear cress).